A 504-amino-acid polypeptide reads, in one-letter code: Hexose transporter 1 (504 aa).

Topologically, residues 1-29 (MTKSSKDICSENEGKKNGKSGFFSTSFKY) are cytoplasmic. A helical transmembrane segment spans residues 30–50 (VLSACIASFIFGYQVSVLNTI). Residues 51 to 78 (KNFIVVEFEWCKGEKDRLNCSNNTIQSS) lie on the Extracellular side of the membrane. A disulfide bond links Cys61 and Cys70. A helical transmembrane segment spans residues 79–99 (FLLASVFIGAVLGCGFSGYLV). Topologically, residues 100–104 (QFGRR) are cytoplasmic. A helical membrane pass occupies residues 105–125 (LSLLIIYNFFFLVSILTSITH). The Extracellular portion of the chain corresponds to 126-129 (HFHT). The chain crosses the membrane as a helical span at residues 130-150 (ILFARLLSGFGIGLVTVSVPM). Residues 151-165 (YISEMTHKDKKGAYG) lie on the Cytoplasmic side of the membrane. Residues 166 to 186 (VMHQLFITFGIFVAVMLGLAM) traverse the membrane as a helical segment. Gln169 provides a ligand contact to alpha-D-glucose. Gln169 serves as a coordination point for beta-D-glucose. The Extracellular portion of the chain corresponds to 187–207 (GEGPKADSTEPLTSFAKLWWR). The chain crosses the membrane as a helical span at residues 208-228 (LMFLFPSVISLIGILALVVFF). The Cytoplasmic portion of the chain corresponds to 229 to 293 (KEETPYFLFE…SALKIPSYRY (65 aa)). Residues 294-314 (VIILGCLLSGLQQFTGINVLV) form a helical membrane-spanning segment. Gln305, Gln306, and Asn311 together coordinate alpha-D-glucose. Gln305 contacts beta-D-glucose. A beta-D-glucose-binding site is contributed by Asn311. At 315–331 (SNSNELYKEFLDSHLIT) the chain is on the extracellular side. A helical membrane pass occupies residues 332 to 352 (ILSVVMTAVNFLMTFPAIYIV). A beta-D-glucose-binding site is contributed by Asn341. Residues 353 to 358 (EKLGRK) lie on the Cytoplasmic side of the membrane. The helical transmembrane segment at 359-379 (TLLLWGCVGVLVAYLPTAIAN) threads the bilayer. Over 380 to 392 (EINRNSNFVKILS) the chain is Extracellular. Residues 393 to 413 (IVATFVMIISFAVSYGPVLWI) traverse the membrane as a helical segment. Trp412 is an alpha-D-glucose binding site. Residues 414–429 (YLHEMFPSEIKDSAAS) lie on the Cytoplasmic side of the membrane. The chain crosses the membrane as a helical span at residues 430–450 (LASLVNWVCAIIVVFPSDIII). Residues 451 to 455 (KKSPS) lie on the Extracellular side of the membrane. A helical transmembrane segment spans residues 456-476 (ILFIVFSVMSILTFFFIFFFI). Over 477–504 (KETKGGEIGTSPYITMEERQKHMTKSVV) the chain is Cytoplasmic.

It belongs to the major facilitator superfamily. Sugar transporter (TC 2.A.1.1) family. As to quaternary structure, homodimer.

The protein localises to the cell membrane. It carries out the reaction D-glucose(out) = D-glucose(in). The enzyme catalyses D-fructose(out) = D-fructose(in). The catalysed reaction is D-galactose(in) = D-galactose(out). It catalyses the reaction D-mannose(out) = D-mannose(in). It carries out the reaction D-glucosamine(out) = D-glucosamine(in). The enzyme catalyses D-xylose(out) = D-xylose(in). Inhibited by cytochalasin B. Inhibited by compound 3361 (3-O-((undec-10-en)-1-yl)-D-glucose). Inhibited by compound HTI-1. In terms of biological role, sodium-independent facilitative hexose transporter. Can transport D-glucose and D-fructose. Can transport D-mannose, D-galactose, D-xylose and D-glucosamine. This Plasmodium falciparum (isolate 3D7) protein is Hexose transporter 1.